Reading from the N-terminus, the 598-residue chain is Dihydroxy-acid dehydratase, mitochondrial (598 aa).

A mitochondrion-targeting transit peptide spans Met-1–Ala-18. Cys-84 is a [2Fe-2S] cluster binding site. Asp-116 is a Mg(2+) binding site. Cys-157 is a binding site for [2Fe-2S] cluster. Asp-158 contacts Mg(2+). A [2Fe-2S] cluster-binding site is contributed by Cys-232. Glu-485 serves as a coordination point for Mg(2+). Ser-511 serves as the catalytic Proton acceptor.

The protein belongs to the IlvD/Edd family. The cofactor is [2Fe-2S] cluster. It depends on Mg(2+) as a cofactor.

It is found in the mitochondrion. The catalysed reaction is (2R)-2,3-dihydroxy-3-methylbutanoate = 3-methyl-2-oxobutanoate + H2O. It carries out the reaction (2R,3R)-2,3-dihydroxy-3-methylpentanoate = (S)-3-methyl-2-oxopentanoate + H2O. Its pathway is amino-acid biosynthesis; L-isoleucine biosynthesis; L-isoleucine from 2-oxobutanoate: step 3/4. It functions in the pathway amino-acid biosynthesis; L-valine biosynthesis; L-valine from pyruvate: step 3/4. Functionally, dihydroxyacid dehydratase that catalyzes the third step in the common pathway leading to biosynthesis of branched-chain amino acids. Catalyzes the dehydration of (2R,3R)-2,3-dihydroxy-3-methylpentanoate (2,3-dihydroxy-3-methylvalerate) into 2-oxo-3-methylpentanoate (2-oxo-3-methylvalerate) and of (2R)-2,3-dihydroxy-3-methylbutanoate (2,3-dihydroxyisovalerate) into 2-oxo-3-methylbutanoate (2-oxoisovalerate), the penultimate precursor to L-isoleucine and L-valine, respectively. The sequence is that of Dihydroxy-acid dehydratase, mitochondrial from Schizosaccharomyces pombe (strain 972 / ATCC 24843) (Fission yeast).